The following is a 124-amino-acid chain: Small ribosomal subunit protein uS12 (124 aa).

Asp89 carries the post-translational modification 3-methylthioaspartic acid.

Belongs to the universal ribosomal protein uS12 family. As to quaternary structure, part of the 30S ribosomal subunit. Contacts proteins S8 and S17. May interact with IF1 in the 30S initiation complex.

Its function is as follows. With S4 and S5 plays an important role in translational accuracy. Interacts with and stabilizes bases of the 16S rRNA that are involved in tRNA selection in the A site and with the mRNA backbone. Located at the interface of the 30S and 50S subunits, it traverses the body of the 30S subunit contacting proteins on the other side and probably holding the rRNA structure together. The combined cluster of proteins S8, S12 and S17 appears to hold together the shoulder and platform of the 30S subunit. In Hydrogenovibrio crunogenus (strain DSM 25203 / XCL-2) (Thiomicrospira crunogena), this protein is Small ribosomal subunit protein uS12.